The primary structure comprises 708 residues: Lactotransferrin (708 aa).

Positions 1 to 19 (MKLFVPALLSLGALGLCLA) are cleaved as a signal peptide. Transferrin-like domains are found at residues 25–352 (VRWC…NLRE) and 364–693 (VVWC…NLKK). 2 cysteine pairs are disulfide-bonded: Cys-28/Cys-64 and Cys-38/Cys-55. Fe cation is bound at residue Asp-79. Lys-92 is a catalytic residue. Residue Tyr-111 coordinates Fe cation. Disulfide bonds link Cys-134-Cys-217, Cys-176-Cys-192, Cys-179-Cys-202, Cys-189-Cys-200, and Cys-250-Cys-264. Thr-136, Arg-140, Ala-142, and Gly-143 together coordinate hydrogencarbonate. Tyr-211 is a Fe cation binding site. Asn-252 carries an N-linked (GlcNAc...) (high mannose) asparagine glycan. His-272 lines the Fe cation pocket. Residue Ser-278 is the Nucleophile of the active site. Asn-300 is a glycosylation site (N-linked (GlcNAc...) (hybrid) asparagine). Disulfide bonds link Cys-367-Cys-399 and Cys-377-Cys-390. Fe cation is bound by residues Asp-414 and Tyr-452. Cystine bridges form between Cys-424/Cys-703, Cys-444/Cys-666, Cys-476/Cys-551, Cys-500/Cys-694, Cys-510/Cys-524, Cys-521/Cys-534, Cys-592/Cys-606, and Cys-644/Cys-649. Positions 478, 482, 484, and 485 each coordinate hydrogencarbonate. The N-linked (GlcNAc...) (complex) asparagine; alternate glycan is linked to Asn-495. An N-linked (GlcNAc...) (high mannose) asparagine; alternate glycan is attached at Asn-495. The N-linked (GlcNAc...) (hybrid) asparagine; alternate glycan is linked to Asn-495. Tyr-545 is a Fe cation binding site. Residue Asn-564 is glycosylated (N-linked (GlcNAc...) (high mannose) asparagine). His-614 is a Fe cation binding site.

It belongs to the transferrin family. Monomer. Found in a complex with LTF, CLU, EPPIN and SEMG1. Found in a complex with MPO and LTF; interacts directly with CP, allows Fe(3+) incorporation into LTF and activation of CP ferroxidase activity. Post-translationally, poly-N-acetyllactosaminic carbohydrate moiety seems to be needed for TLR4 activation.

Its subcellular location is the secreted. It localises to the cytoplasmic granule. Its function is as follows. Transferrins are iron binding transport proteins which can bind two Fe(3+) ions in association with the binding of an anion, usually bicarbonate. Functionally, major iron-binding and multifunctional protein found in exocrine fluids such as breast milk and mucosal secretions. Has antimicrobial activity, which depends on the extracellular cation concentration. Antimicrobial properties include bacteriostasis, which is related to its ability to sequester free iron and thus inhibit microbial growth, as well as direct bactericidal properties leading to the release of lipopolysaccharides from the bacterial outer membrane. Can also prevent bacterial biofilm development in P.aeruginosa infection. Has weak antifungal activity against C.albicans. Has anabolic, differentiating and anti-apoptotic effects on osteoblasts and can also inhibit osteoclastogenesis, possibly playing a role in the regulation of bone growth. Promotes binding of species C adenoviruses to epithelial cells, promoting adenovirus infection. Can inhibit papillomavirus infections. Stimulates the TLR4 signaling pathway leading to NF-kappa-B activation and subsequent pro-inflammatory cytokine production while also interfering with the lipopolysaccharide (LPS)-stimulated TLR4 signaling. Inhibits neutrophil granulocyte migration to sites of apoptosis, when secreted by apoptotic cells. Stimulates VEGFA-mediated endothelial cell migration and proliferation. Binds heparin, chondroitin sulfate and possibly other glycosaminoglycans (GAGs). Also binds specifically to pneumococcal surface protein A (PspA), the lipid A portion of bacterial lipopolysaccharide (LPS), lysozyme and DNA. Lactoferricin binds to the bacterial surface and is crucial for the bactericidal functions. Has some antiviral activity against papillomavirus infection. N-terminal region shows strong antifungal activity against C.albicans. Contains two BBXB heparin-binding consensus sequences that appear to form the predominate functional GAG-binding site. In terms of biological role, the lactotransferrin transferrin-like domain 1 functions as a serine protease of the peptidase S60 family that cuts arginine rich regions. This function contributes to the antimicrobial activity. Shows a preferential cleavage at -Arg-Ser-Arg-Arg-|- and -Arg-Arg-Ser-Arg-|-, and of Z-Phe-Arg-|-aminomethylcoumarin sites. This Bubalus bubalis (Domestic water buffalo) protein is Lactotransferrin (LTF).